The chain runs to 403 residues: Probable tRNA sulfurtransferase (403 aa).

A THUMP domain is found at 61 to 166; the sequence is EAIAESLKDV…SGYSYIMCDE (106 aa). Residues 184-185, 209-210, arginine 266, glycine 288, and glutamine 297 each bind ATP; these read LL and HF.

This sequence belongs to the ThiI family.

The protein localises to the cytoplasm. The enzyme catalyses [ThiI sulfur-carrier protein]-S-sulfanyl-L-cysteine + a uridine in tRNA + 2 reduced [2Fe-2S]-[ferredoxin] + ATP + H(+) = [ThiI sulfur-carrier protein]-L-cysteine + a 4-thiouridine in tRNA + 2 oxidized [2Fe-2S]-[ferredoxin] + AMP + diphosphate. The catalysed reaction is [ThiS sulfur-carrier protein]-C-terminal Gly-Gly-AMP + S-sulfanyl-L-cysteinyl-[cysteine desulfurase] + AH2 = [ThiS sulfur-carrier protein]-C-terminal-Gly-aminoethanethioate + L-cysteinyl-[cysteine desulfurase] + A + AMP + 2 H(+). It participates in cofactor biosynthesis; thiamine diphosphate biosynthesis. Its function is as follows. Catalyzes the ATP-dependent transfer of a sulfur to tRNA to produce 4-thiouridine in position 8 of tRNAs, which functions as a near-UV photosensor. Also catalyzes the transfer of sulfur to the sulfur carrier protein ThiS, forming ThiS-thiocarboxylate. This is a step in the synthesis of thiazole, in the thiamine biosynthesis pathway. The sulfur is donated as persulfide by IscS. The protein is Probable tRNA sulfurtransferase of Bacillus cytotoxicus (strain DSM 22905 / CIP 110041 / 391-98 / NVH 391-98).